Here is a 552-residue protein sequence, read N- to C-terminus: Chaperonin GroEL 1 (552 aa).

Residues 30–33 (TLGP), Lys51, 87–91 (DGTTT), Gly415, 479–481 (NAA), and Asp495 contribute to the ATP site.

This sequence belongs to the chaperonin (HSP60) family. As to quaternary structure, forms a cylinder of 14 subunits composed of two heptameric rings stacked back-to-back. Interacts with the co-chaperonin GroES.

Its subcellular location is the cytoplasm. The catalysed reaction is ATP + H2O + a folded polypeptide = ADP + phosphate + an unfolded polypeptide.. In terms of biological role, together with its co-chaperonin GroES, plays an essential role in assisting protein folding. The GroEL-GroES system forms a nano-cage that allows encapsulation of the non-native substrate proteins and provides a physical environment optimized to promote and accelerate protein folding. The protein is Chaperonin GroEL 1 of Albidiferax ferrireducens (strain ATCC BAA-621 / DSM 15236 / T118) (Rhodoferax ferrireducens).